A 682-amino-acid polypeptide reads, in one-letter code: L-type lectin-domain containing receptor kinase VI.2 (682 aa).

The first 26 residues, 1–26 (MGTQRSMFIVSFLFKLFLFLSVHVRA), serve as a signal peptide directing secretion. The Extracellular portion of the chain corresponds to 27 to 310 (QRTTTNFAFR…AKKEGLNSQV (284 aa)). The segment at 29–277 (TTTNFAFRGF…AHYVMGWSFS (249 aa)) is legume-lectin like. The helical transmembrane segment at 311-331 (IVMIVALSAVMLVMLVLLFFF) threads the bilayer. Over 332–682 (VMYKKRLGQE…RVSSTSRISQ (351 aa)) the chain is Cytoplasmic. Residues 367–641 (FKKTGIIGTG…LRYLNGEENV (275 aa)) enclose the Protein kinase domain. ATP-binding positions include 373–381 (IGTGGFGTV) and Lys-395. The active-site Proton acceptor is Asp-494.

In the C-terminal section; belongs to the protein kinase superfamily. Ser/Thr protein kinase family. This sequence in the N-terminal section; belongs to the leguminous lectin family. Strongly expressed in the vascular system and trichomes of the leaves. Also expressed in guard cells, anthers, stigmas and germinating seeds, but not found in petals or roots. Increased susceptibility to the bacteria Pseudomonas syringae, characterized by stronger necrotic symptoms and higher bacterial proliferation.

The protein resides in the cell membrane. It carries out the reaction L-seryl-[protein] + ATP = O-phospho-L-seryl-[protein] + ADP + H(+). The enzyme catalyses L-threonyl-[protein] + ATP = O-phospho-L-threonyl-[protein] + ADP + H(+). In terms of biological role, involved in negative regulation of abscisic acid response in seed germination. Its function is as follows. Involved in resistance response to the pathogenic bacteria Pseudomonas syringae. This is L-type lectin-domain containing receptor kinase VI.2 from Arabidopsis thaliana (Mouse-ear cress).